The following is a 346-amino-acid chain: Phosphoribosylformylglycinamidine cyclo-ligase (346 aa).

The protein belongs to the AIR synthase family.

Its subcellular location is the cytoplasm. It carries out the reaction 2-formamido-N(1)-(5-O-phospho-beta-D-ribosyl)acetamidine + ATP = 5-amino-1-(5-phospho-beta-D-ribosyl)imidazole + ADP + phosphate + H(+). It participates in purine metabolism; IMP biosynthesis via de novo pathway; 5-amino-1-(5-phospho-D-ribosyl)imidazole from N(2)-formyl-N(1)-(5-phospho-D-ribosyl)glycinamide: step 2/2. The polypeptide is Phosphoribosylformylglycinamidine cyclo-ligase (Shewanella piezotolerans (strain WP3 / JCM 13877)).